The chain runs to 334 residues: Glycerol-3-phosphate dehydrogenase [NAD(P)+] (334 aa).

The NADPH site is built by tryptophan 13, arginine 33, and lysine 106. Residues lysine 106, glycine 137, and serine 139 each coordinate sn-glycerol 3-phosphate. Residue alanine 141 participates in NADPH binding. Positions 192, 245, 255, 256, and 257 each coordinate sn-glycerol 3-phosphate. The active-site Proton acceptor is lysine 192. Arginine 256 is a binding site for NADPH. NADPH contacts are provided by valine 280 and glutamate 282.

The protein belongs to the NAD-dependent glycerol-3-phosphate dehydrogenase family.

The protein resides in the cytoplasm. It carries out the reaction sn-glycerol 3-phosphate + NAD(+) = dihydroxyacetone phosphate + NADH + H(+). The catalysed reaction is sn-glycerol 3-phosphate + NADP(+) = dihydroxyacetone phosphate + NADPH + H(+). The protein operates within membrane lipid metabolism; glycerophospholipid metabolism. Catalyzes the reduction of the glycolytic intermediate dihydroxyacetone phosphate (DHAP) to sn-glycerol 3-phosphate (G3P), the key precursor for phospholipid synthesis. The sequence is that of Glycerol-3-phosphate dehydrogenase [NAD(P)+] from Chlamydia muridarum (strain MoPn / Nigg).